A 240-amino-acid chain; its full sequence is uncharacterized protein (240 aa).

The span at 1 to 11 (MGMTPRRKRRG) shows a compositional bias: basic residues. Positions 1 to 32 (MGMTPRRKRRGGAVQITRPTGRPRTPTTQTTK) are disordered. Residues 17-31 (TRPTGRPRTPTTQTT) show a composition bias toward low complexity. Transmembrane regions (helical) follow at residues 36–56 (WVVG…VELI), 93–113 (LMAN…AGLS), 115–135 (FVWA…LIGN), 146–166 (IGAS…GLFV), 172–192 (IVIG…AMPV), and 198–218 (GVSW…AYLL).

This sequence to M.leprae ML1171.

Its subcellular location is the cell membrane. This is an uncharacterized protein from Mycobacterium tuberculosis (strain CDC 1551 / Oshkosh).